Consider the following 555-residue polypeptide: Small ribosomal subunit protein uS3m (555 aa).

Positions 1 to 20 (MARKGNPISVRLGKNRSSDS) are disordered.

Belongs to the universal ribosomal protein uS3 family.

Its subcellular location is the mitochondrion. The chain is Small ribosomal subunit protein uS3m (RPS3) from Brassica napus (Rape).